The sequence spans 126 residues: Adenosine 5'-monophosphoramidase HINT1 (126 aa).

Position 2 is an N-acetylalanine (Ala2). Positions 18 to 126 (IFGKIIRKEI…GGRQMHWPPG (109 aa)) constitute an HIT domain. 2 positions are modified to N6-acetyllysine: Lys21 and Lys30. AMP is bound at residue 43-44 (DI). A phosphoserine mark is found at Ser45 and Ser72. AMP is bound by residues Asn99, 105–107 (GQS), and 112–114 (HLH). The Histidine triad motif signature appears at 110–114 (HVHLH). His112 serves as the catalytic Tele-AMP-histidine intermediate.

Belongs to the HINT family. In terms of assembly, homodimer. Interacts with CDK7. Interacts with RUVBL1 and RUVBL2 and is associated with the LEF1/TCF1-CTNNB1 complex and with a KAT5 histone acetyltransferase complex. Identified in a complex with MITF and CTNNB1. Interacts with CDC34 and RBX1, and is part of a SCF (SKP2-CUL1-F-box protein) E3 ubiquitin-protein ligase complex. Interacts with SUMO1, SUMO2 and RGS17. Interacts with the Ten-1 ICD form of TENM1. Interacts with CALM1; interaction increases in the presence of calcium ions. As to expression, widely expressed.

The protein localises to the cytoplasm. The protein resides in the nucleus. The catalysed reaction is adenosine 5'-phosphoramidate + H2O = AMP + NH4(+). In terms of biological role, exhibits adenosine 5'-monophosphoramidase activity, hydrolyzing purine nucleotide phosphoramidates with a single phosphate group such as adenosine 5'monophosphoramidate (AMP-NH2) to yield AMP and NH2. Hydrolyzes adenosine 5'monophosphomorpholidate (AMP-morpholidate) and guanosine 5'monophosphomorpholidate (GMP-morpholidate). Hydrolyzes lysyl-AMP (AMP-N-epsilon-(N-alpha-acetyl lysine methyl ester)) generated by lysine tRNA ligase, as well as Met-AMP, His-AMP and Asp-AMP, lysyl-GMP (GMP-N-epsilon-(N-alpha-acetyl lysine methyl ester)) and AMP-N-alanine methyl ester. Hydrolyzes 3-indolepropionic acyl-adenylate, tryptamine adenosine phosphoramidate monoester and other fluorogenic purine nucleoside tryptamine phosphoramidates in vitro. Can also convert adenosine 5'-O-phosphorothioate and guanosine 5'-O-phosphorothioate to the corresponding nucleoside 5'-O-phosphates with concomitant release of hydrogen sulfide. In addition, functions as scaffolding protein that modulates transcriptional activation by the LEF1/TCF1-CTNNB1 complex and by the complex formed with MITF and CTNNB1. Modulates p53/TP53 levels and p53/TP53-mediated apoptosis. Modulates proteasomal degradation of target proteins by the SCF (SKP2-CUL1-F-box protein) E3 ubiquitin-protein ligase complex. Also exhibits SUMO-specific isopeptidase activity, deconjugating SUMO1 from RGS17. Deconjugates SUMO1 from RANGAP1. The protein is Adenosine 5'-monophosphoramidase HINT1 (HINT1) of Homo sapiens (Human).